A 414-amino-acid chain; its full sequence is MEELIQKARSVKKASIKLQSVSTVQKNEALLQIGAALKRKEDAILKANKMDVKEARDKGIRDSLIDRLALNQKRIDDMIQSCHRVAGLKDPVGEVIASWVQSDGLRISKVRVPIGAIGIIYESRPNVTVEASILALKTGNSILLRGGSDAFHSNMAIVKAIKEGLSRSSLPVESIEIVESTDRKLVEQMLKLREYLSLIVPRGSNRLIQYVVENSSIPVLETGVGNCHIFVDDSADLEKALEIVDNAKTQRPGTCNAVETLLVHQSIAAAFLPMMADRLSKKGVEIRGCSQTQKFIKVKPATDSDWETEFLDLILAVRVVNSLDEAIAHIQKYSSGHSEAILTENYFNAKKFVENIDAAAVYVNASTRFTDGGQFGFGGEIGISTQRLHARGPVGLEGLTTYKYVILGDYNVRR.

The protein belongs to the gamma-glutamyl phosphate reductase family.

The protein localises to the cytoplasm. The enzyme catalyses L-glutamate 5-semialdehyde + phosphate + NADP(+) = L-glutamyl 5-phosphate + NADPH + H(+). The protein operates within amino-acid biosynthesis; L-proline biosynthesis; L-glutamate 5-semialdehyde from L-glutamate: step 2/2. Catalyzes the NADPH-dependent reduction of L-glutamate 5-phosphate into L-glutamate 5-semialdehyde and phosphate. The product spontaneously undergoes cyclization to form 1-pyrroline-5-carboxylate. The chain is Gamma-glutamyl phosphate reductase from Kosmotoga olearia (strain ATCC BAA-1733 / DSM 21960 / TBF 19.5.1).